Reading from the N-terminus, the 161-residue chain is uncharacterized protein (161 aa).

To R.leguminosarum PsiB.

This is an uncharacterized protein from Sinorhizobium fredii (strain NBRC 101917 / NGR234).